We begin with the raw amino-acid sequence, 554 residues long: Kinesin-like protein 3 (554 aa).

A Kinesin motor domain is found at 3–325; it reads SIKVVCRIRP…LRFGHRAKSI (323 aa). ATP is bound by residues 84 to 91 and 233 to 240; these read GQTGSGKT and GSESVGKS. Residues 446-473 are a coiled coil; sequence LSSTKQQLSDLMTALGDAQERYVELVKN.

Belongs to the TRAFAC class myosin-kinesin ATPase superfamily. Kinesin family.

It is found in the cytoplasm. Its subcellular location is the cytoskeleton. In terms of biological role, cytoplasmic motor that could play a role in Golgi membrane recycling. The chain is Kinesin-like protein 3 (klp3) from Schizosaccharomyces pombe (strain 972 / ATCC 24843) (Fission yeast).